The primary structure comprises 233 residues: Syntaxin-52 (233 aa).

At 1–209 (MASSSDPWMR…NKSMKSGCSC (209 aa)) the chain is on the cytoplasmic side. One can recognise a t-SNARE coiled-coil homology domain in the interval 137-199 (RQVMREQDEG…RRVQKSLALM (63 aa)). A helical; Anchor for type IV membrane protein membrane pass occupies residues 210-230 (MSMLLSVLGIVGLALVIWLLV). Topologically, residues 231-233 (KYL) are vesicular.

It belongs to the syntaxin family. Interacts either with VTI11 and SYP21, or with VTI11 and SYP22 in the prevacuolar compartment, or with VTI12 and SYP61 in the trans-Golgi network to form t-SNARE complexes. As to expression, expressed in root, leaf, stem, flower and silique.

Its subcellular location is the golgi apparatus. It localises to the trans-Golgi network membrane. The protein resides in the prevacuolar compartment membrane. In terms of biological role, vesicle trafficking protein that functions in the secretory pathway. The sequence is that of Syntaxin-52 (SYP52) from Arabidopsis thaliana (Mouse-ear cress).